The primary structure comprises 71 residues: Protein YqgC (71 aa).

The polypeptide is Protein YqgC (yqgC) (Escherichia coli (strain K12)).